We begin with the raw amino-acid sequence, 331 residues long: RNA 3'-terminal phosphate cyclase (331 aa).

Residues Gln-100 and 276–280 (HLADQ) contribute to the ATP site. Catalysis depends on His-301, which acts as the Tele-AMP-histidine intermediate.

The protein belongs to the RNA 3'-terminal cyclase family. Type 1 subfamily.

Its subcellular location is the cytoplasm. It catalyses the reaction a 3'-end 3'-phospho-ribonucleotide-RNA + ATP = a 3'-end 2',3'-cyclophospho-ribonucleotide-RNA + AMP + diphosphate. Catalyzes the conversion of 3'-phosphate to a 2',3'-cyclic phosphodiester at the end of RNA. The mechanism of action of the enzyme occurs in 3 steps: (A) adenylation of the enzyme by ATP; (B) transfer of adenylate to an RNA-N3'P to produce RNA-N3'PP5'A; (C) and attack of the adjacent 2'-hydroxyl on the 3'-phosphorus in the diester linkage to produce the cyclic end product. The biological role of this enzyme is unknown but it is likely to function in some aspects of cellular RNA processing. This chain is RNA 3'-terminal phosphate cyclase, found in Methanococcoides burtonii (strain DSM 6242 / NBRC 107633 / OCM 468 / ACE-M).